A 483-amino-acid polypeptide reads, in one-letter code: Altronate oxidoreductase (483 aa).

18–29 (IIQFGEGNFLRA) lines the NAD(+) pocket.

This sequence belongs to the mannitol dehydrogenase family. UxaB subfamily.

The enzyme catalyses D-altronate + NAD(+) = keto-D-tagaturonate + NADH + H(+). It participates in carbohydrate metabolism; pentose and glucuronate interconversion. This chain is Altronate oxidoreductase, found in Klebsiella pneumoniae subsp. pneumoniae (strain ATCC 700721 / MGH 78578).